A 324-amino-acid polypeptide reads, in one-letter code: DNA repair and recombination protein RadA (324 aa).

114–121 (GEFGSGKT) lines the ATP pocket.

This sequence belongs to the eukaryotic RecA-like protein family.

In terms of biological role, involved in DNA repair and in homologous recombination. Binds and assemble on single-stranded DNA to form a nucleoprotein filament. Hydrolyzes ATP in a ssDNA-dependent manner and promotes DNA strand exchange between homologous DNA molecules. This chain is DNA repair and recombination protein RadA, found in Metallosphaera sedula (strain ATCC 51363 / DSM 5348 / JCM 9185 / NBRC 15509 / TH2).